The primary structure comprises 486 residues: Catalase (486 aa).

Positions 1–28 are disordered; it reads MENKKLTAANGRPIADNQNSQTAGPRGP. Active-site residues include His54 and Asn127. Tyr337 contacts heme.

This sequence belongs to the catalase family. In terms of assembly, homodimer. Heme serves as cofactor.

The enzyme catalyses 2 H2O2 = O2 + 2 H2O. Decomposes hydrogen peroxide into water and oxygen; serves to protect cells from the toxic effects of hydrogen peroxide. May be involved in aerotolerance of B.fragilis. The polypeptide is Catalase (katA) (Bacteroides fragilis (strain YCH46)).